Consider the following 332-residue polypeptide: Ketol-acid reductoisomerase (NADP(+)) (332 aa).

A KARI N-terminal Rossmann domain is found at 2-182 (AKVYYDEDAS…GCTRAGLIET (181 aa)). NADP(+)-binding positions include 25–28 (YGSQ), serine 51, serine 53, and 83–86 (DTIQ). Histidine 108 is a catalytic residue. Glycine 134 is a binding site for NADP(+). In terms of domain architecture, KARI C-terminal knotted spans 183 to 327 (TFKEETETDL…KELRKMMPWL (145 aa)). 4 residues coordinate Mg(2+): aspartate 191, glutamate 195, glutamate 227, and glutamate 231. Serine 252 contributes to the substrate binding site.

This sequence belongs to the ketol-acid reductoisomerase family. It depends on Mg(2+) as a cofactor.

It catalyses the reaction (2R)-2,3-dihydroxy-3-methylbutanoate + NADP(+) = (2S)-2-acetolactate + NADPH + H(+). The catalysed reaction is (2R,3R)-2,3-dihydroxy-3-methylpentanoate + NADP(+) = (S)-2-ethyl-2-hydroxy-3-oxobutanoate + NADPH + H(+). Its pathway is amino-acid biosynthesis; L-isoleucine biosynthesis; L-isoleucine from 2-oxobutanoate: step 2/4. It participates in amino-acid biosynthesis; L-valine biosynthesis; L-valine from pyruvate: step 2/4. Involved in the biosynthesis of branched-chain amino acids (BCAA). Catalyzes an alkyl-migration followed by a ketol-acid reduction of (S)-2-acetolactate (S2AL) to yield (R)-2,3-dihydroxy-isovalerate. In the isomerase reaction, S2AL is rearranged via a Mg-dependent methyl migration to produce 3-hydroxy-3-methyl-2-ketobutyrate (HMKB). In the reductase reaction, this 2-ketoacid undergoes a metal-dependent reduction by NADPH to yield (R)-2,3-dihydroxy-isovalerate. The protein is Ketol-acid reductoisomerase (NADP(+)) of Persephonella marina (strain DSM 14350 / EX-H1).